The following is a 221-amino-acid chain: D-glycero-alpha-D-manno-heptose 1-phosphate guanylyltransferase (221 aa).

This sequence belongs to the D-alpha-D-heptose-1-P guanylyltransferase family.

It catalyses the reaction D-glycero-alpha-D-manno-heptose 1-phosphate + GTP + H(+) = GDP-D-glycero-alpha-D-manno-heptose + diphosphate. It participates in nucleotide-sugar biosynthesis; GDP-D-glycero-alpha-D-manno-heptose biosynthesis; GDP-D-glycero-alpha-D-manno-heptose from D-glycero-alpha-D-manno-heptose 7-phosphate: step 3/3. The protein operates within capsule biogenesis; capsule polysaccharide biosynthesis. Catalyzes the GDP transfer from GTP to D-glycero-alpha-D-manno-heptose 1-phosphate, yielding GDP-D-alpha-D-heptose. Is able to use ATP, CTP or UTP as substrate in the presence of pyrophosphatase, but at a significantly slower rate. Can also form GDP-alpha-D-mannose from alpha-D-mannose 1-phosphate and GTP. This Campylobacter jejuni subsp. jejuni serotype O:2 (strain ATCC 700819 / NCTC 11168) protein is D-glycero-alpha-D-manno-heptose 1-phosphate guanylyltransferase.